The primary structure comprises 468 residues: Siroheme synthase 1 (468 aa).

Positions 1–204 are precorrin-2 dehydrogenase /sirohydrochlorin ferrochelatase; that stretch reads MDYLPIFCRL…GDKASANQLA (204 aa). Residues 22–23 and 43–44 each bind NAD(+); these read EV and PA. The residue at position 128 (serine 128) is a Phosphoserine. Residues 216-468 are uroporphyrinogen-III C-methyltransferase; sequence GEVILVGAGP…NHGVQAAALA (253 aa). Proline 225 provides a ligand contact to S-adenosyl-L-methionine. Catalysis depends on aspartate 248, which acts as the Proton acceptor. Lysine 270 acts as the Proton donor in catalysis. S-adenosyl-L-methionine contacts are provided by residues 301–303, isoleucine 306, 331–332, methionine 383, and glycine 412; these read GGD and TA.

The protein in the N-terminal section; belongs to the precorrin-2 dehydrogenase / sirohydrochlorin ferrochelatase family. This sequence in the C-terminal section; belongs to the precorrin methyltransferase family.

It carries out the reaction uroporphyrinogen III + 2 S-adenosyl-L-methionine = precorrin-2 + 2 S-adenosyl-L-homocysteine + H(+). The catalysed reaction is precorrin-2 + NAD(+) = sirohydrochlorin + NADH + 2 H(+). It catalyses the reaction siroheme + 2 H(+) = sirohydrochlorin + Fe(2+). It functions in the pathway cofactor biosynthesis; adenosylcobalamin biosynthesis; precorrin-2 from uroporphyrinogen III: step 1/1. It participates in cofactor biosynthesis; adenosylcobalamin biosynthesis; sirohydrochlorin from precorrin-2: step 1/1. Its pathway is porphyrin-containing compound metabolism; siroheme biosynthesis; precorrin-2 from uroporphyrinogen III: step 1/1. The protein operates within porphyrin-containing compound metabolism; siroheme biosynthesis; siroheme from sirohydrochlorin: step 1/1. It functions in the pathway porphyrin-containing compound metabolism; siroheme biosynthesis; sirohydrochlorin from precorrin-2: step 1/1. In terms of biological role, multifunctional enzyme that catalyzes the SAM-dependent methylations of uroporphyrinogen III at position C-2 and C-7 to form precorrin-2 via precorrin-1. Then it catalyzes the NAD-dependent ring dehydrogenation of precorrin-2 to yield sirohydrochlorin. Finally, it catalyzes the ferrochelation of sirohydrochlorin to yield siroheme. In Aeromonas salmonicida (strain A449), this protein is Siroheme synthase 1.